Consider the following 97-residue polypeptide: Acylphosphatase (97 aa).

Residues Thr9–Glu95 enclose the Acylphosphatase-like domain. Active-site residues include Arg24 and Asn42.

Belongs to the acylphosphatase family.

The catalysed reaction is an acyl phosphate + H2O = a carboxylate + phosphate + H(+). In Acidovorax sp. (strain JS42), this protein is Acylphosphatase (acyP).